The sequence spans 352 residues: Phosphoribosylformylglycinamidine cyclo-ligase (352 aa).

The protein belongs to the AIR synthase family.

The protein localises to the cytoplasm. It catalyses the reaction 2-formamido-N(1)-(5-O-phospho-beta-D-ribosyl)acetamidine + ATP = 5-amino-1-(5-phospho-beta-D-ribosyl)imidazole + ADP + phosphate + H(+). It functions in the pathway purine metabolism; IMP biosynthesis via de novo pathway; 5-amino-1-(5-phospho-D-ribosyl)imidazole from N(2)-formyl-N(1)-(5-phospho-D-ribosyl)glycinamide: step 2/2. In Pseudomonas fluorescens (strain ATCC BAA-477 / NRRL B-23932 / Pf-5), this protein is Phosphoribosylformylglycinamidine cyclo-ligase.